The sequence spans 291 residues: Lys-63-specific deubiquitinase BRCC36-like (291 aa).

The 168-residue stretch at 12-179 (VYLESDAFLV…YTCFQSVQAS (168 aa)) folds into the MPN domain. 3 residues coordinate Zn(2+): H122, H124, and D135. The JAMM motif motif lies at 122–135 (HSHPHITVWPSHVD). Positions 259–286 (LQWLEDRLEQNQQRLQELEQEKEDLMEE) form a coiled coil.

It belongs to the peptidase M67A family. BRCC36 subfamily.

Functionally, metalloprotease that specifically cleaves 'Lys-63'-linked polyubiquitin chains. The polypeptide is Lys-63-specific deubiquitinase BRCC36-like (Mus musculus (Mouse)).